A 444-amino-acid polypeptide reads, in one-letter code: Type I restriction enzyme EcoDI specificity subunit (444 aa).

This sequence belongs to the type-I restriction system S methylase family. The type I restriction/modification system is composed of three polypeptides R, M and S; the restriction enzyme has stoichiometry R(2)M(2)S(1) while the methyltransferase is M(2)S(1).

Functionally, the specificity (S) subunit of a type I restriction enzyme; this subunit dictates DNA sequence specificity. The M and S subunits together form a methyltransferase (MTase) that methylates two adenine residues of the sequence 5'-TTAN(7)GTCY-3'. In the presence of the R subunit the complex can also act as an endonuclease, binding to the same target sequence but cutting the DNA some distance from this site. Whether the DNA is cut or modified depends on the methylation state of the target sequence. When the target site is unmodified, the DNA is cut. When the target site is hemimethylated, the complex acts as a maintenance MTase modifying the DNA so that both strands become methylated. After locating a non-methylated recognition site, the enzyme complex serves as a molecular motor that translocates DNA in an ATP-dependent manner until a collision occurs that triggers cleavage. This chain is Type I restriction enzyme EcoDI specificity subunit, found in Escherichia coli.